A 597-amino-acid chain; its full sequence is Putative Xaa-Pro dipeptidyl-peptidase (597 aa).

Active-site charge relay system residues include S224, D336, and H367.

It belongs to the peptidase S15 family.

It carries out the reaction Hydrolyzes Xaa-Pro-|- bonds to release unblocked, N-terminal dipeptides from substrates including Ala-Pro-|-p-nitroanilide and (sequentially) Tyr-Pro-|-Phe-Pro-|-Gly-Pro-|-Ile.. This chain is Putative Xaa-Pro dipeptidyl-peptidase, found in Bacillus anthracis.